A 215-amino-acid chain; its full sequence is Cytochrome b6 (215 aa).

The helical transmembrane segment at 32–52 threads the bilayer; sequence IFYCLGGITLTCFLVQVATGF. Heme c is bound at residue C35. Residues H86 and H100 each contribute to the heme b site. A run of 3 helical transmembrane segments spans residues 90–110, 116–136, and 186–206; these read ASMM…TGGF, LTWV…VTGY, and LHTF…FSMI. Heme b contacts are provided by H187 and H202.

It belongs to the cytochrome b family. PetB subfamily. The 4 large subunits of the cytochrome b6-f complex are cytochrome b6, subunit IV (17 kDa polypeptide, PetD), cytochrome f and the Rieske protein, while the 4 small subunits are PetG, PetL, PetM and PetN. The complex functions as a dimer. Heme b serves as cofactor. Heme c is required as a cofactor.

It localises to the plastid. The protein localises to the chloroplast thylakoid membrane. In terms of biological role, component of the cytochrome b6-f complex, which mediates electron transfer between photosystem II (PSII) and photosystem I (PSI), cyclic electron flow around PSI, and state transitions. This chain is Cytochrome b6, found in Lotus japonicus (Lotus corniculatus var. japonicus).